We begin with the raw amino-acid sequence, 177 residues long: Interleukin-1 receptor antagonist protein (177 aa).

An N-terminal signal peptide occupies residues 1–25 (MEICRGLRSHLITLLLFLFHSETIC). Cysteines 91 and 141 form a disulfide. Asn109 carries N-linked (GlcNAc...) asparagine glycosylation.

The protein belongs to the IL-1 family. The intracellular form of IL1RN is predominantly expressed in epithelial cells.

It is found in the secreted. The protein localises to the cytoplasm. Its function is as follows. Anti-inflammatory antagonist of interleukin-1 family of proinflammatory cytokines such as interleukin-1beta/IL1B and interleukin-1alpha/IL1A. Protects from immune dysregulation and uncontrolled systemic inflammation triggered by IL1 for a range of innate stimulatory agents such as pathogens. The sequence is that of Interleukin-1 receptor antagonist protein (IL1RN) from Homo sapiens (Human).